The sequence spans 515 residues: N-acetylglucosamine-1-phosphodiester alpha-N-acetylglucosaminidase (515 aa).

The N-terminal stretch at 1-25 (MATSTGRWLLLRLALFGFLWEASGG) is a signal peptide. The propeptide at 26–49 (LDSGASRDDDLLLPYPRARARLPR) is removed in mature form. Topologically, residues 50–448 (DCTRVRAGNR…AGELSFFTRT (399 aa)) are lumenal. 5 disulfides stabilise this stretch: Cys115–Cys148, Cys132–Cys323, Cys307–Cys314, Cys362–Cys373, and Cys380–Cys389. Asn208, Asn214, and Asn296 each carry an N-linked (GlcNAc...) asparagine glycan. Residues 358-390 (DELDCGPSNCSQHGLCTETGCRCDAGWTGSNCS) enclose the EGF-like domain. Residues Asn366, Asn388, and Asn420 are each glycosylated (N-linked (GlcNAc...) asparagine). The helical transmembrane segment at 449–469 (AWLALTLALAFLLLISTAANL) threads the bilayer. The Cytoplasmic portion of the chain corresponds to 470 to 515 (SLLLSRAERNRRLHGDYAYHPLQEMNGEPLAAEKEQPGGAHNPFKD). Residues 486 to 493 (YAYHPLQE) form a mediates the interaction with AP4M1 region. The short motif at 488–491 (YHPL) is the Tyrosine-based internalization motif element. The short motif at 511–515 (NPFKD) is the NPF internalization motif element.

As to quaternary structure, homotetramer arranged as two disulfide-linked homodimers. Interacts with AP4M1. In terms of processing, the precursor is cleaved and activated in the trans-Golgi network by a furin endopeptidase. Isoform 2 may be brain-specific.

Its subcellular location is the golgi apparatus. The protein localises to the golgi stack membrane. It is found in the trans-Golgi network. The enzyme catalyses N(4)-[6-(N-acetyl-alpha-D-glucosaminyl-1-phospho)-alpha-D-mannosyl-(1-&gt;2)-alpha-D-mannosyl-(glycan)]-L-asparaginyl-[protein] + H2O = N(4)-[6-phospho-alpha-D-mannosyl-(1-&gt;2)-alpha-D-mannosyl-(glycan)]-L-asparaginyl-[protein] + N-acetyl-D-glucosamine + H(+). Its pathway is protein modification; protein glycosylation. Functionally, catalyzes the second step in the formation of the mannose 6-phosphate targeting signal on lysosomal enzyme oligosaccharides by removing GlcNAc residues from GlcNAc-alpha-P-mannose moieties, which are formed in the first step. Also hydrolyzes UDP-GlcNAc, a sugar donor for Golgi N-acetylglucosaminyltransferases. The chain is N-acetylglucosamine-1-phosphodiester alpha-N-acetylglucosaminidase (NAGPA) from Homo sapiens (Human).